A 212-amino-acid chain; its full sequence is Ras-related protein Rab-2A (212 aa).

An N-acetylalanine modification is found at A2. Positions A2–K19 are required for interaction with PRKCI. GTP contacts are provided by G16, V17, G18, K19, S20, C21, and T38. S20 lines the Mg(2+) pocket. The short motif at L37–E42 is the Switch 1 element. Positions 38 and 61 each coordinate Mg(2+). The short motif at A63–T72 is the Switch 2 element. Positions 64, 119, 120, 122, 150, and 151 each coordinate GTP. The segment at Q190–C212 is disordered. A compositionally biased stretch (gly residues) spans N201–C212. S-geranylgeranyl cysteine attachment occurs at residues C211 and C212.

Belongs to the small GTPase superfamily. Rab family. In terms of assembly, interacts with PRKCI. Interacts with TRIP11. Interacts (in GTP-bound form) with GARIN1B. Interacts (GTP-bound) with HOPS complex component VPS39; interaction contributes to obtaining a functional HOPS complex that promotes autophagosome-lysosome membrane fusion driven by STX17-SNAP29-VAMP8. Interacts with VPS41. The cofactor is Mg(2+). Post-translationally, prenylated. Prenylation is required for association with cellular membranes.

The protein resides in the endoplasmic reticulum-Golgi intermediate compartment membrane. It localises to the melanosome. Its subcellular location is the endoplasmic reticulum membrane. The protein localises to the golgi apparatus membrane. It is found in the cytoplasmic vesicle. The protein resides in the secretory vesicle. It localises to the acrosome. Its subcellular location is the autophagosome membrane. The enzyme catalyses GTP + H2O = GDP + phosphate + H(+). Its activity is regulated as follows. Regulated by guanine nucleotide exchange factors (GEFs) which promote the exchange of bound GDP for free GTP, GTPase activating proteins (GAPs) which increase the GTP hydrolysis activity, and GDP dissociation inhibitors (GDIs) which inhibit the dissociation of the nucleotide from the GTPase. Functionally, the small GTPases Rab are key regulators of intracellular membrane trafficking, from the formation of transport vesicles to their fusion with membranes. Rabs cycle between active GTP-bound and inactive GDP-bound states. In their active state, drive transport of vesicular carriers from donor organelles to acceptor organelles to regulate the membrane traffic that maintains organelle identity and morphology. RAB2A regulates autophagy by promoting autophagosome-lysosome fusion via recruitment of the HOPS endosomal tethering complex; this process involves autophagosomal RAB2A and lysosomal RAB39A recruitment of HOPS subcomplexes VPS39-VPS11 and VPS41-VPS16-VPS18-VPS33A, respectively, which assemble into a functional complex to mediate membrane tethering and SNAREs-driven membrane fusion. Required for protein transport from the endoplasmic reticulum to the Golgi complex. Regulates the compacted morphology of the Golgi. Together with RAB2B, redundantly required for efficient autophagic flux. This Mus musculus (Mouse) protein is Ras-related protein Rab-2A.